A 503-amino-acid polypeptide reads, in one-letter code: Aspartyl/glutamyl-tRNA(Asn/Gln) amidotransferase subunit B (503 aa).

It belongs to the GatB/GatE family. GatB subfamily. Heterotrimer of A, B and C subunits.

It catalyses the reaction L-glutamyl-tRNA(Gln) + L-glutamine + ATP + H2O = L-glutaminyl-tRNA(Gln) + L-glutamate + ADP + phosphate + H(+). It carries out the reaction L-aspartyl-tRNA(Asn) + L-glutamine + ATP + H2O = L-asparaginyl-tRNA(Asn) + L-glutamate + ADP + phosphate + 2 H(+). Allows the formation of correctly charged Asn-tRNA(Asn) or Gln-tRNA(Gln) through the transamidation of misacylated Asp-tRNA(Asn) or Glu-tRNA(Gln) in organisms which lack either or both of asparaginyl-tRNA or glutaminyl-tRNA synthetases. The reaction takes place in the presence of glutamine and ATP through an activated phospho-Asp-tRNA(Asn) or phospho-Glu-tRNA(Gln). This Cereibacter sphaeroides (strain KD131 / KCTC 12085) (Rhodobacter sphaeroides) protein is Aspartyl/glutamyl-tRNA(Asn/Gln) amidotransferase subunit B.